The sequence spans 501 residues: Cytochrome P450 2J6 (501 aa).

Position 447 (Cys447) interacts with heme.

The protein belongs to the cytochrome P450 family. It depends on heme as a cofactor.

The protein localises to the endoplasmic reticulum membrane. It is found in the microsome membrane. It carries out the reaction an organic molecule + reduced [NADPH--hemoprotein reductase] + O2 = an alcohol + oxidized [NADPH--hemoprotein reductase] + H2O + H(+). The polypeptide is Cytochrome P450 2J6 (Cyp2j6) (Mus musculus (Mouse)).